The following is a 343-amino-acid chain: Galactoside alpha-(1,2)-fucosyltransferase 2 (343 aa).

Over 1-14 (MLVVQMPFSFPMAH) the chain is Cytoplasmic. Residues 15–28 (FILFVFTVSTIFHV) form a helical; Signal-anchor for type II membrane protein membrane-spanning segment. The Lumenal portion of the chain corresponds to 29–343 (QQRLAKIQAM…AADLSPLLKH (315 aa)). N-linked (GlcNAc...) asparagine glycosylation is found at Asn-188, Asn-282, and Asn-308.

Belongs to the glycosyltransferase 11 family.

The protein localises to the golgi apparatus. Its subcellular location is the golgi stack membrane. It catalyses the reaction a beta-D-galactosyl-(1-&gt;3)-N-acetyl-beta-D-glucosaminyl derivative + GDP-beta-L-fucose = an alpha-L-Fuc-(1-&gt;2)-beta-D-Gal-(1-&gt;3)-beta-D-GlcNAc derivative + GDP + H(+). The catalysed reaction is a beta-D-galactosyl-(1-&gt;4)-N-acetyl-beta-D-glucosaminyl derivative + GDP-beta-L-fucose = an alpha-L-Fuc-(1-&gt;2)-beta-D-Gal-(1-&gt;4)-beta-D-GlcNAc derivative + GDP + H(+). It carries out the reaction a neolactoside nLc4Cer + GDP-beta-L-fucose = a neolactoside IV(2)-alpha-Fuc-nLc4Cer + GDP + H(+). The enzyme catalyses a neolactoside nLc4Cer(d18:1(4E)) + GDP-beta-L-fucose = a neolactoside IV(2)-alpha-Fuc-nLc4Cer(d18:1(4E)) + GDP + H(+). It catalyses the reaction a ganglioside GM1 + GDP-beta-L-fucose = a ganglioside Fuc-GM1 + GDP + H(+). The catalysed reaction is a ganglioside GA1 + GDP-beta-L-fucose = a ganglioside Fuc-GA1 + GDP + H(+). It carries out the reaction Lc4Cer + GDP-beta-L-fucose = alpha-L-fucosyl-(1-&gt;2)-beta-D-galactosyl-(1-&gt;3)-N-acetyl-beta-D-glucosaminyl-(1-&gt;3)-beta-D-galactosyl-(1-&gt;4)-beta-D-glucosyl-(1&lt;-&gt;1')-ceramide + GDP + H(+). The enzyme catalyses a beta-D-Gal-(1-&gt;3)-beta-D-GlcNAc-(1-&gt;3)-beta-D-Gal-(1-&gt;4)-beta-D-Glc-(1&lt;-&gt;1')-Cer(d18:1(4E)) + GDP-beta-L-fucose = alpha-L-fucosyl-(1-&gt;2)- beta-D-galactosyl-(1-&gt;3)-N-acetyl-beta-D-glucosaminyl-(1-&gt;3)-beta-D-galactosyl-(1-&gt;4)-beta-D-glucosyl-(1&lt;-&gt;1')-N-acylsphing-4-enine + GDP + H(+). It catalyses the reaction a ganglioside GD1b + GDP-beta-L-fucose = a ganglioside Fuc-GD1b + GDP + H(+). The catalysed reaction is a ganglioside GM1 (d18:1(4E)) + GDP-beta-L-fucose = a ganglioside Fuc-GM1 (d18:1(4E)) + GDP + H(+). It carries out the reaction a globoside GalGb4Cer (d18:1(4E)) + GDP-beta-L-fucose = a globoside Globo-H (d18:1(4E)) + GDP + H(+). The enzyme catalyses a lactoside III(4)-a-Fuc-Lc4Cer + GDP-beta-L-fucose = a lactoside IV(2),III(4)-a-[Fuc]2-Lc4Cer + GDP + H(+). It catalyses the reaction beta-D-galactosyl-(1-&gt;3)-N-acetyl-D-galactosamine + GDP-beta-L-fucose = alpha-L-fucosyl-(1-&gt;2)-beta-D-galactosyl-(1-&gt;3)-N-acetyl-D-galactosamine + GDP + H(+). It participates in protein modification; protein glycosylation. In terms of biological role, catalyzes the transfer of L-fucose, from a guanosine diphosphate-beta-L-fucose, to the terminal galactose on both O- and N-linked glycans chains of cell surface glycoproteins and glycolipids and the resulting epitope regulates several processes such as cell-cell interaction including host-microbe interaction, cell surface expression and cell proliferation. Preferentially fucosylates gangliosides GA1 and GM1 in the antrum, cecum and colon and in the female reproductive organs. Fucosylated host glycoproteins or glycolipids mediate interaction with intestinal microbiota influencing its composition. Creates a soluble precursor oligosaccharide FuC-alpha ((1,2)Galbeta-) called the H antigen which is an essential substrate for the final step in the soluble ABO blood group antigen synthesis pathway. This chain is Galactoside alpha-(1,2)-fucosyltransferase 2, found in Gorilla gorilla gorilla (Western lowland gorilla).